Here is a 466-residue protein sequence, read N- to C-terminus: UDP-N-acetylmuramoylalanine--D-glutamate ligase (466 aa).

Position 128–134 (128–134 (GTNGKST)) interacts with ATP.

The protein belongs to the MurCDEF family.

The protein resides in the cytoplasm. The catalysed reaction is UDP-N-acetyl-alpha-D-muramoyl-L-alanine + D-glutamate + ATP = UDP-N-acetyl-alpha-D-muramoyl-L-alanyl-D-glutamate + ADP + phosphate + H(+). It functions in the pathway cell wall biogenesis; peptidoglycan biosynthesis. Cell wall formation. Catalyzes the addition of glutamate to the nucleotide precursor UDP-N-acetylmuramoyl-L-alanine (UMA). This is UDP-N-acetylmuramoylalanine--D-glutamate ligase from Bartonella henselae (strain ATCC 49882 / DSM 28221 / CCUG 30454 / Houston 1) (Rochalimaea henselae).